A 726-amino-acid chain; its full sequence is NHL repeat-containing protein 2 (726 aa).

A Thioredoxin domain is found at 43 to 200 (QKVDGWEQDL…TSIALKYYKD (158 aa)). NHL repeat units follow at residues 212-254 (KLYK…VWKN), 265-307 (NPGR…IDLE), 335-369 (ISSP…IWAL), 409-439 (FAQP…VRTV), 461-505 (AFGD…VDPK), and 518-562 (TNNV…MDLE).

Monomer. As to expression, ubiquitous. Detected in heart, kidney, muscle, brain, lung, liver and in skin fibroblasts (at protein level).

It is found in the cytoplasm. The protein localises to the cytosol. In terms of biological role, required for normal embryonic development. This is NHL repeat-containing protein 2 (NHLRC2) from Homo sapiens (Human).